Here is a 362-residue protein sequence, read N- to C-terminus: Formate dehydrogenase (362 aa).

Positions 93 and 119 each coordinate substrate. NAD(+) is bound by residues 174–175 (RI), aspartate 195, 230–234 (PLHAG), threonine 256, aspartate 282, 311–314 (HYSG), and serine 357.

It belongs to the D-isomer specific 2-hydroxyacid dehydrogenase family. FDH subfamily. In terms of assembly, homodimer.

The protein localises to the cytoplasm. The enzyme catalyses formate + NAD(+) = CO2 + NADH. Catalyzes the NAD(+)-dependent oxidation of formate to carbon dioxide. Formate oxidation is the final step in the methanol oxidation pathway in methylotrophic microorganisms. Has a role in the detoxification of exogenous formate in non-methylotrophic organisms. The polypeptide is Formate dehydrogenase (Pichia angusta (Yeast)).